The following is a 380-amino-acid chain: Cytochrome b (380 aa).

The next 4 membrane-spanning stretches (helical) occupy residues 33–53 (FGSLLGLCLIIQILTGLFLAM), 77–98 (WLIRYMHANGASMFFICLFLHV), 113–133 (WNMGIVLLFAVMATAFMGYVL), and 178–198 (FFAFHFILPFIITALVLVHLL). Heme b is bound by residues His-83 and His-97. The heme b site is built by His-182 and His-196. His-201 provides a ligand contact to a ubiquinone. 4 consecutive transmembrane segments (helical) span residues 226-246 (IKDFLGVLILLMAFMILTLFF), 288-308 (LGGVLALILSIVILAFMPLLH), 320-340 (ITQTMYWILVADLLVLTWIGG), and 347-367 (FIIIGQTASIAYFAIIVILMP).

Belongs to the cytochrome b family. The cytochrome bc1 complex contains 11 subunits: 3 respiratory subunits (MT-CYB, CYC1 and UQCRFS1), 2 core proteins (UQCRC1 and UQCRC2) and 6 low-molecular weight proteins (UQCRH/QCR6, UQCRB/QCR7, UQCRQ/QCR8, UQCR10/QCR9, UQCR11/QCR10 and a cleavage product of UQCRFS1). This cytochrome bc1 complex then forms a dimer. Heme b serves as cofactor.

Its subcellular location is the mitochondrion inner membrane. Functionally, component of the ubiquinol-cytochrome c reductase complex (complex III or cytochrome b-c1 complex) that is part of the mitochondrial respiratory chain. The b-c1 complex mediates electron transfer from ubiquinol to cytochrome c. Contributes to the generation of a proton gradient across the mitochondrial membrane that is then used for ATP synthesis. The protein is Cytochrome b (MT-CYB) of Microtus guentheri (Gunther's vole).